Here is a 505-residue protein sequence, read N- to C-terminus: ATP synthase subunit alpha (505 aa).

170–177 lines the ATP pocket; that stretch reads GDRQTGKT.

This sequence belongs to the ATPase alpha/beta chains family. In terms of assembly, F-type ATPases have 2 components, CF(1) - the catalytic core - and CF(0) - the membrane proton channel. CF(1) has five subunits: alpha(3), beta(3), gamma(1), delta(1), epsilon(1). CF(0) has four main subunits: a(1), b(1), b'(1) and c(9-12).

The protein localises to the cellular thylakoid membrane. It carries out the reaction ATP + H2O + 4 H(+)(in) = ADP + phosphate + 5 H(+)(out). Its function is as follows. Produces ATP from ADP in the presence of a proton gradient across the membrane. The alpha chain is a regulatory subunit. In Prochlorococcus marinus (strain MIT 9303), this protein is ATP synthase subunit alpha.